The chain runs to 360 residues: MTTALQRRESASLWQQFCEWVTSTDNRLYVGWFGVLMIPTLLTATICFIVAFIAAPPVDIDGIREPVAGSLMYGNNIISGAVVPSSNAIGLHFYPIWEAASLDEWLYNGGPYQLVVFHFLIGVFCYMGREWELSYRLGMRPWICVAYSAPVAAATAVFLIYPIGQGSFSDGMPLGISGTFNFMFVFQAEHNILMHPFHMLGVAGVFGGSLFSAMHGSLVTSSLVRETTETESQNYGYKFGQEEETYNIVAAHGYFGRLIFQYASFNNSRSLHFFLAAWPVVGIWFTSLGISTMAFNLNGFNFNQSVLDSQGRVINTWADVLNRANLGMEVMHERNAHNFPLDLAAGEATPVALTAPAING.

A run of 3 helical transmembrane segments spans residues Y29 to I46, H118 to L133, and W142 to A156. Residue H118 participates in chlorophyll a binding. A pheophytin a-binding site is contributed by Y126. Residues D170 and E189 each contribute to the [CaMn4O5] cluster site. A helical membrane pass occupies residues F197–L218. Residue H198 coordinates chlorophyll a. A quinone-binding positions include H215 and S264–F265. Position 215 (H215) interacts with Fe cation. H272 contributes to the Fe cation binding site. A helical transmembrane segment spans residues F274 to L288. Residues H332, E333, D342, and A344 each coordinate [CaMn4O5] cluster. Residues A345 to G360 constitute a propeptide that is removed on maturation.

It belongs to the reaction center PufL/M/PsbA/D family. As to quaternary structure, PSII is composed of 1 copy each of membrane proteins PsbA, PsbB, PsbC, PsbD, PsbE, PsbF, PsbH, PsbI, PsbJ, PsbK, PsbL, PsbM, PsbT, PsbX, PsbY, PsbZ, Psb30/Ycf12, peripheral proteins PsbO, CyanoQ (PsbQ), PsbU, PsbV and a large number of cofactors. It forms dimeric complexes. It depends on The D1/D2 heterodimer binds P680, chlorophylls that are the primary electron donor of PSII, and subsequent electron acceptors. It shares a non-heme iron and each subunit binds pheophytin, quinone, additional chlorophylls, carotenoids and lipids. D1 provides most of the ligands for the Mn4-Ca-O5 cluster of the oxygen-evolving complex (OEC). There is also a Cl(-1) ion associated with D1 and D2, which is required for oxygen evolution. The PSII complex binds additional chlorophylls, carotenoids and specific lipids. as a cofactor. Tyr-161 forms a radical intermediate that is referred to as redox-active TyrZ, YZ or Y-Z. In terms of processing, C-terminally processed by CtpA; processing is essential to allow assembly of the oxygen-evolving complex and thus photosynthetic growth.

The protein resides in the cellular thylakoid membrane. It carries out the reaction 2 a plastoquinone + 4 hnu + 2 H2O = 2 a plastoquinol + O2. Functionally, photosystem II (PSII) is a light-driven water:plastoquinone oxidoreductase that uses light energy to abstract electrons from H(2)O, generating O(2) and a proton gradient subsequently used for ATP formation. It consists of a core antenna complex that captures photons, and an electron transfer chain that converts photonic excitation into a charge separation. The D1/D2 (PsbA/PsbD) reaction center heterodimer binds P680, the primary electron donor of PSII as well as several subsequent electron acceptors. In Synechococcus elongatus (strain ATCC 33912 / PCC 7942 / FACHB-805) (Anacystis nidulans R2), this protein is Photosystem II protein D1 2.